The following is a 62-amino-acid chain: Large ribosomal subunit protein bL28 (62 aa).

The disordered stretch occupies residues 1 to 24 (MGKQCFVTGRKASTGNNRSHALNS). The span at 11-24 (KASTGNNRSHALNS) shows a compositional bias: polar residues.

This sequence belongs to the bacterial ribosomal protein bL28 family.

In Staphylococcus saprophyticus subsp. saprophyticus (strain ATCC 15305 / DSM 20229 / NCIMB 8711 / NCTC 7292 / S-41), this protein is Large ribosomal subunit protein bL28.